A 646-amino-acid chain; its full sequence is A-kinase anchor protein 8-like (646 aa).

Residues 1-268 (MSYTGFVQGS…MRRTWKTWTT (268 aa)) are sufficient for activation of CTE-mediated expression. Arginine 208 is subject to Asymmetric dimethylarginine; alternate. At arginine 208 the chain carries Omega-N-methylarginine; alternate. Omega-N-methylarginine is present on residues arginine 217, arginine 237, and arginine 247. N6-acetyllysine is present on lysine 257. The segment at 264-381 (KTWTTADFRT…QDKQKKRQRD (118 aa)) is disordered. Residue threonine 267 is modified to Phosphothreonine. Positions 274–279 (KKKKRK) match the Nuclear localization signal motif. Residues 280 to 296 (QGGSPDEPDSKATRTDC) carry the Nuclear export signal (NES) motif. Phosphoserine is present on serine 283. Over residues 287 to 296 (PDSKATRTDC) the composition is skewed to basic and acidic residues. Threonine 292 carries the phosphothreonine modification. Serine 297 is subject to Phosphoserine. The span at 298-314 (DNSDSDNDEGTEGEATE) shows a compositional bias: acidic residues. The segment covering 337–349 (EDGREEGKEDPEK) has biased composition (basic and acidic residues). The Nuclear localization signal signature appears at 362-364 (KRK). 2 consecutive C2H2 AKAP95-type zinc fingers follow at residues 391 to 413 (CSLC…SKFH) and 484 to 507 (CAAC…TMDH). The segment at 545-646 (GENPFTDSPE…DDEEGGGGAP (102 aa)) is disordered. Phosphoserine is present on serine 552. A compositionally biased stretch (acidic residues) spans 552-563 (SPEEEKEQEEAE). The span at 564–586 (GGALDEGAQGEAAGISEGAEGVP) shows a compositional bias: low complexity. The span at 587–607 (AQPPVPPEPAPGAVSPPPPPP) shows a compositional bias: pro residues. Acidic residues predominate over residues 634–646 (DVEDDEEGGGGAP).

This sequence belongs to the AKAP95 family. In terms of assembly, interacts (via N-terminus) with DHX9 (via RGG region). Interacts with TMPO isoform Beta, PRPF40A, RNF43, lamin-B. Interacts with HDAC3; increased during mitosis. Interacts with EBV EBNA-LP. Interacts with HIV-1 reverse transcriptase/ribonuclease H. Post-translationally, phosphorylated on serine or threonine residues possibly by PKA; probably modulating the interaction with TMPO isoform Beta. Ubiquitously expressed. Expressed in the brain cortex (at protein level).

It is found in the nucleus. Its subcellular location is the nucleus matrix. It localises to the nucleus speckle. The protein localises to the PML body. The protein resides in the cytoplasm. Functionally, could play a role in constitutive transport element (CTE)-mediated gene expression by association with DHX9. Increases CTE-dependent nuclear unspliced mRNA export. Proposed to target PRKACA to the nucleus but does not seem to be implicated in the binding of regulatory subunit II of PKA. May be involved in nuclear envelope breakdown and chromatin condensation. May be involved in anchoring nuclear membranes to chromatin in interphase and in releasing membranes from chromating at mitosis. May regulate the initiation phase of DNA replication when associated with TMPO isoform Beta. Required for cell cycle G2/M transition and histone deacetylation during mitosis. In mitotic cells recruits HDAC3 to the vicinity of chromatin leading to deacetylation and subsequent phosphorylation at 'Ser-10' of histone H3; in this function seems to act redundantly with AKAP8. May be involved in regulation of pre-mRNA splicing. In terms of biological role, (Microbial infection) In case of EBV infection, may target PRKACA to EBNA-LP-containing nuclear sites to modulate transcription from specific promoters. Its function is as follows. (Microbial infection) Can synergize with DHX9 to activate the CTE-mediated gene expression of type D retroviruses. (Microbial infection) In case of HIV-1 infection, involved in the DHX9-promoted annealing of host tRNA(Lys3) to viral genomic RNA as a primer in reverse transcription; in vitro negatively regulates DHX9 annealing activity. This Homo sapiens (Human) protein is A-kinase anchor protein 8-like (AKAP8L).